The sequence spans 106 residues: Replication protein A 14 kDa subunit (106 aa).

This sequence belongs to the replication factor A protein 3 family. As to quaternary structure, component of the heterotrimeric canonical replication protein A complex (RPA). Interacts with RPA1B, RPA2A, RPA2B and RPA2C.

The protein resides in the nucleus. Functionally, as part of the replication protein A (RPA/RP-A), a single-stranded DNA-binding heterotrimeric complex, may play an essential role in DNA replication, recombination and repair. Binds and stabilizes single-stranded DNA intermediates, preventing complementary DNA reannealing and recruiting different proteins involved in DNA metabolism. In Oryza sativa subsp. japonica (Rice), this protein is Replication protein A 14 kDa subunit (RPA3).